The primary structure comprises 96 residues: Probable Fe(2+)-trafficking protein (96 aa).

Residues 21 to 40 (LPKMPHPPFPNKKGQELQET) are disordered.

It belongs to the Fe(2+)-trafficking protein family.

Could be a mediator in iron transactions between iron acquisition and iron-requiring processes, such as synthesis and/or repair of Fe-S clusters in biosynthetic enzymes. The polypeptide is Probable Fe(2+)-trafficking protein (Psychrobacter arcticus (strain DSM 17307 / VKM B-2377 / 273-4)).